A 283-amino-acid chain; its full sequence is Acetylglutamate kinase (283 aa).

Residues 63 to 64 (GG), Arg-85, and Asn-178 each bind substrate.

This sequence belongs to the acetylglutamate kinase family. ArgB subfamily.

It localises to the cytoplasm. The catalysed reaction is N-acetyl-L-glutamate + ATP = N-acetyl-L-glutamyl 5-phosphate + ADP. The protein operates within amino-acid biosynthesis; L-arginine biosynthesis; N(2)-acetyl-L-ornithine from L-glutamate: step 2/4. Functionally, catalyzes the ATP-dependent phosphorylation of N-acetyl-L-glutamate. The protein is Acetylglutamate kinase of Prochlorococcus marinus (strain AS9601).